Consider the following 109-residue polypeptide: Nucleoid-associated protein MS1507 (109 aa).

Residues 1 to 21 are disordered; sequence MFGKGGLGNLMKQAQQMQERM.

Belongs to the YbaB/EbfC family. Homodimer.

The protein resides in the cytoplasm. Its subcellular location is the nucleoid. Binds to DNA and alters its conformation. May be involved in regulation of gene expression, nucleoid organization and DNA protection. This Mannheimia succiniciproducens (strain KCTC 0769BP / MBEL55E) protein is Nucleoid-associated protein MS1507.